The primary structure comprises 663 residues: Protein associated with UVRAG as autophagy enhancer (663 aa).

Disordered stretches follow at residues 1–36 (MVSQ…LDTE) and 65–136 (DASP…EERA). Composition is skewed to polar residues over residues 80-93 (TASN…TSPL) and 105-130 (PKGT…SSVT). Residues 196–235 (EAFVLPVDAEKENAHFYVADMIISVMEKMKCNILSQQHTE) form an interaction with UVRAG region. 4 positions are modified to N6-acetyllysine: Lys-484, Lys-534, Lys-574, and Lys-634.

Interacts with UVRAG; the interaction is direct and promotes association with the PI3K/PI3KC3 and HOPS complexes. Interacts with STX17. In terms of processing, acetylated by KAT5/TIP60 under autophagy induction, promoting autophagosome maturation and lipid metabolism. Lys-484 and Lys-574 constitute the key sites for tuning function in autophagy.

It localises to the cytoplasmic vesicle. Its subcellular location is the autophagosome membrane. Regulator of autophagy that promotes autophagosome maturation by facilitating the biogenesis of phosphatidylinositol 3-phosphate (PtdIns(3)P) in late steps of autophagy. Acts by antagonizing RUBCN, thereby stimulating phosphatidylinositol 3-kinase activity of the PI3K/PI3KC3 complex. Following anchorage to the autophagosomal SNARE STX17, promotes the recruitment of PI3K/PI3KC3 and HOPS complexes to the autophagosome to regulate the fusion specificity of autophagosomes with late endosomes/lysosomes. Binds phosphoinositides phosphatidylinositol 3-phosphate (PtdIns(3)P), 4-phosphate (PtdIns(4)P) and 5-phosphate (PtdIns(5)P). In addition to its role in autophagy, acts as a regulator of lipid and glycogen homeostasis. May act as a tumor suppressor. The polypeptide is Protein associated with UVRAG as autophagy enhancer (Bos taurus (Bovine)).